We begin with the raw amino-acid sequence, 278 residues long: 4-deoxy-L-threo-5-hexosulose-uronate ketol-isomerase (278 aa).

Zn(2+)-binding residues include His-196, His-198, Glu-203, and His-245.

Belongs to the KduI family. In terms of assembly, homohexamer. Requires Zn(2+) as cofactor.

The enzyme catalyses 5-dehydro-4-deoxy-D-glucuronate = 3-deoxy-D-glycero-2,5-hexodiulosonate. Its pathway is glycan metabolism; pectin degradation; 2-dehydro-3-deoxy-D-gluconate from pectin: step 4/5. Its function is as follows. Catalyzes the isomerization of 5-dehydro-4-deoxy-D-glucuronate to 3-deoxy-D-glycero-2,5-hexodiulosonate. The protein is 4-deoxy-L-threo-5-hexosulose-uronate ketol-isomerase of Escherichia coli O127:H6 (strain E2348/69 / EPEC).